The following is a 594-amino-acid chain: CTP synthase (594 aa).

Residues 1 to 272 (MARPKNVKYV…DLRVLKKLGL (272 aa)) form an amidoligase domain region. S18 is a binding site for CTP. Residue S18 participates in UTP binding. Residue 19–24 (SLGKGI) participates in ATP binding. An L-glutamine-binding site is contributed by Y59. ATP is bound at residue D76. Residues D76 and E146 each contribute to the Mg(2+) site. CTP-binding positions include 153-155 (DIE), 193-198 (KTKPTQ), and K229. Residues 193–198 (KTKPTQ) and K229 contribute to the UTP site. The region spanning 299-543 (TIVVCGKYTE…VGAAKSYAAV (245 aa)) is the Glutamine amidotransferase type-1 domain. An L-glutamine-binding site is contributed by G363. C390 acts as the Nucleophile; for glutamine hydrolysis in catalysis. L-glutamine-binding positions include 391-394 (LGMQ), E414, and R471. Catalysis depends on residues H516 and E518. The span at 562–571 (AEAYAAYSEE) shows a compositional bias: low complexity. The interval 562–594 (AEAYAAYSEESSAESKSFFPDNGGHDEERDSGQ) is disordered. Residues 584–594 (GGHDEERDSGQ) are compositionally biased toward basic and acidic residues.

The protein belongs to the CTP synthase family. As to quaternary structure, homotetramer.

The enzyme catalyses UTP + L-glutamine + ATP + H2O = CTP + L-glutamate + ADP + phosphate + 2 H(+). It carries out the reaction L-glutamine + H2O = L-glutamate + NH4(+). It catalyses the reaction UTP + NH4(+) + ATP = CTP + ADP + phosphate + 2 H(+). It functions in the pathway pyrimidine metabolism; CTP biosynthesis via de novo pathway; CTP from UDP: step 2/2. Allosterically activated by GTP, when glutamine is the substrate; GTP has no effect on the reaction when ammonia is the substrate. The allosteric effector GTP functions by stabilizing the protein conformation that binds the tetrahedral intermediate(s) formed during glutamine hydrolysis. Inhibited by the product CTP, via allosteric rather than competitive inhibition. In terms of biological role, catalyzes the ATP-dependent amination of UTP to CTP with either L-glutamine or ammonia as the source of nitrogen. Regulates intracellular CTP levels through interactions with the four ribonucleotide triphosphates. The chain is CTP synthase from Chlorobium phaeovibrioides (strain DSM 265 / 1930) (Prosthecochloris vibrioformis (strain DSM 265)).